A 257-amino-acid chain; its full sequence is Snake venom serine protease salmonase (257 aa).

The signal sequence occupies residues 1-18 (MVLIRVLVNFLILQLSYA). Residues 19 to 24 (QKSSEL) constitute a propeptide that is removed on maturation. Positions 25 to 248 (VIGGDECNIN…YIDWIQSIIA (224 aa)) constitute a Peptidase S1 domain. Intrachain disulfides connect cysteine 31–cysteine 162, cysteine 49–cysteine 65, cysteine 141–cysteine 209, cysteine 173–cysteine 188, and cysteine 199–cysteine 224. Catalysis depends on histidine 64, which acts as the Charge relay system. The N-linked (GlcNAc...) asparagine glycan is linked to asparagine 78. Aspartate 109 (charge relay system) is an active-site residue. The Charge relay system role is filled by serine 203.

Belongs to the peptidase S1 family. Snake venom subfamily. Monomer. Expressed by the venom gland.

Its subcellular location is the secreted. Functionally, snake venom serine protease that may act in the hemostasis system of the prey. In Gloydius brevicauda (Korean slamosa snake), this protein is Snake venom serine protease salmonase.